A 313-amino-acid chain; its full sequence is Formimidoylglutamase (313 aa).

Mn(2+) is bound by residues His130, Asp155, His157, Asp159, Asp241, and Asp243.

It belongs to the arginase family. The cofactor is Mn(2+).

The enzyme catalyses N-formimidoyl-L-glutamate + H2O = formamide + L-glutamate. Its pathway is amino-acid degradation; L-histidine degradation into L-glutamate; L-glutamate from N-formimidoyl-L-glutamate (hydrolase route): step 1/1. In terms of biological role, catalyzes the conversion of N-formimidoyl-L-glutamate to L-glutamate and formamide. The polypeptide is Formimidoylglutamase (Salmonella paratyphi B (strain ATCC BAA-1250 / SPB7)).